A 975-amino-acid chain; its full sequence is Translation initiation factor IF-2 (975 aa).

Basic and acidic residues predominate over residues 48–63 (DHLRKSHGATDGDKRK). Disordered stretches follow at residues 48-84 (DHLR…GKAR) and 96-388 (FVKR…QAPT). The segment covering 104–115 (ETGADQAQAQTD) has biased composition (low complexity). The span at 120–177 (AELKRREEEARREAELLEKQAQELRERQERLEREEAERRAREEAAEAERRRAEEEAAA) shows a compositional bias: basic and acidic residues. Residues 178 to 211 (KRAAAAQAEAAQQAAAAREQAQRAQSEPAEQSAQ) are compositionally biased toward low complexity. A compositionally biased stretch (basic and acidic residues) spans 212–263 (DEARAAAERAAQREAAKKAEDAAREAADKARAEQEEIRKRREAAEAEARAIR). Low complexity predominate over residues 302 to 330 (KPAGEAAAARPAAKKPASGAPAPAAAPAG). A compositionally biased stretch (gly residues) spans 359–372 (SSGGVDRGWRGGPK). Residues 475–644 (PRPPVVTVMG…LLQAEVLELK (170 aa)) enclose the tr-type G domain. The segment at 484–491 (GHVDHGKT) is G1. 484-491 (GHVDHGKT) contacts GTP. Residues 509 to 513 (GITQH) are G2. The tract at residues 530 to 533 (DTPG) is G3. GTP contacts are provided by residues 530 to 534 (DTPGH) and 584 to 587 (NKID). The tract at residues 584–587 (NKID) is G4. The segment at 620 to 622 (SAK) is G5.

The protein belongs to the TRAFAC class translation factor GTPase superfamily. Classic translation factor GTPase family. IF-2 subfamily.

It localises to the cytoplasm. In terms of biological role, one of the essential components for the initiation of protein synthesis. Protects formylmethionyl-tRNA from spontaneous hydrolysis and promotes its binding to the 30S ribosomal subunits. Also involved in the hydrolysis of GTP during the formation of the 70S ribosomal complex. This is Translation initiation factor IF-2 from Burkholderia pseudomallei (strain 1710b).